Consider the following 279-residue polypeptide: Serine protease 29 (279 aa).

The N-terminal stretch at 1–17 (MLIQLCLTLFFLGCSIA) is a signal peptide. A Peptidase S1 domain is found at 31-276 (IVGGHSAPQG…FLPWITQQMQ (246 aa)). The cysteines at positions 62 and 78 are disulfide-linked. Active-site charge relay system residues include H77 and D124. Disulfide bonds link C158/C234, C191/C215, and C224/C252. An N-linked (GlcNAc...) asparagine glycan is attached at N197. Residue S228 is the Charge relay system of the active site. Residue N235 is glycosylated (N-linked (GlcNAc...) asparagine).

This sequence belongs to the peptidase S1 family. In terms of assembly, homooligomer, heterodimer and heterotetramer. Able to form homo- and hetero- tetrameric structures. Heterotetramer is far more stable than the homotetramer. Expressed in embryos and placenta. Found in uterus especially in glandular epithelium during zona lysis and implantation.

It localises to the secreted. In terms of biological role, involved in embryo hatching and implantation. The protein is Serine protease 29 (Prss29) of Mus musculus (Mouse).